The primary structure comprises 299 residues: Serpentine receptor class gamma-30 (299 aa).

The next 7 membrane-spanning stretches (helical) occupy residues 18–38 (GIQFVYFIVGLGFHFAVIKVL), 59–79 (ILSVLIILLDLVLIRVFNYIP), 98–118 (ILFIEQYLQFVKSLIFCFMVV), 137–157 (IIPHVIVFCILCPLLGVWTAF), 189–209 (IISSITIVTVCICSVISMLCI), 223–243 (LTASALAMSIFYVFALSMNIY), and 260–280 (ALTAFAFDIILVCPPVIMLCL).

The protein belongs to the nematode receptor-like protein srg family.

The protein resides in the membrane. The polypeptide is Serpentine receptor class gamma-30 (srg-30) (Caenorhabditis elegans).